The primary structure comprises 384 residues: 1-deoxy-D-xylulose 5-phosphate reductoisomerase (384 aa).

Residues threonine 10, glycine 11, serine 12, isoleucine 13, glycine 36, lysine 37, asparagine 38, and asparagine 121 each contribute to the NADPH site. 1-deoxy-D-xylulose 5-phosphate is bound at residue lysine 122. Residue glutamate 123 participates in NADPH binding. Residue aspartate 147 participates in Mn(2+) binding. 4 residues coordinate 1-deoxy-D-xylulose 5-phosphate: serine 148, glutamate 149, serine 173, and histidine 196. Residue glutamate 149 coordinates Mn(2+). Glycine 202 is an NADPH binding site. Serine 209, asparagine 214, lysine 215, and glutamate 218 together coordinate 1-deoxy-D-xylulose 5-phosphate. Glutamate 218 is a Mn(2+) binding site.

It belongs to the DXR family. It depends on Mg(2+) as a cofactor. Mn(2+) serves as cofactor.

It catalyses the reaction 2-C-methyl-D-erythritol 4-phosphate + NADP(+) = 1-deoxy-D-xylulose 5-phosphate + NADPH + H(+). It participates in isoprenoid biosynthesis; isopentenyl diphosphate biosynthesis via DXP pathway; isopentenyl diphosphate from 1-deoxy-D-xylulose 5-phosphate: step 1/6. Functionally, catalyzes the NADPH-dependent rearrangement and reduction of 1-deoxy-D-xylulose-5-phosphate (DXP) to 2-C-methyl-D-erythritol 4-phosphate (MEP). The protein is 1-deoxy-D-xylulose 5-phosphate reductoisomerase of Exiguobacterium sibiricum (strain DSM 17290 / CCUG 55495 / CIP 109462 / JCM 13490 / 255-15).